The chain runs to 200 residues: Crossover junction endodeoxyribonuclease RuvC (200 aa).

Active-site residues include Asp18, Glu78, and Asp151. Residues Asp18, Glu78, and Asp151 each contribute to the Mg(2+) site.

This sequence belongs to the RuvC family. In terms of assembly, homodimer which binds Holliday junction (HJ) DNA. The HJ becomes 2-fold symmetrical on binding to RuvC with unstacked arms; it has a different conformation from HJ DNA in complex with RuvA. In the full resolvosome a probable DNA-RuvA(4)-RuvB(12)-RuvC(2) complex forms which resolves the HJ. Mg(2+) serves as cofactor.

Its subcellular location is the cytoplasm. It carries out the reaction Endonucleolytic cleavage at a junction such as a reciprocal single-stranded crossover between two homologous DNA duplexes (Holliday junction).. Its function is as follows. The RuvA-RuvB-RuvC complex processes Holliday junction (HJ) DNA during genetic recombination and DNA repair. Endonuclease that resolves HJ intermediates. Cleaves cruciform DNA by making single-stranded nicks across the HJ at symmetrical positions within the homologous arms, yielding a 5'-phosphate and a 3'-hydroxyl group; requires a central core of homology in the junction. The consensus cleavage sequence is 5'-(A/T)TT(C/G)-3'. Cleavage occurs on the 3'-side of the TT dinucleotide at the point of strand exchange. HJ branch migration catalyzed by RuvA-RuvB allows RuvC to scan DNA until it finds its consensus sequence, where it cleaves and resolves the cruciform DNA. In Cytophaga hutchinsonii (strain ATCC 33406 / DSM 1761 / CIP 103989 / NBRC 15051 / NCIMB 9469 / D465), this protein is Crossover junction endodeoxyribonuclease RuvC.